The sequence spans 216 residues: Superoxide dismutase [Mn], mitochondrial (216 aa).

The transit peptide at 1-18 directs the protein to the mitochondrion; it reads MSFLNRNLSRTIKAAVRG. Residues His-44, His-92, Asp-176, and His-180 each contribute to the Mn(2+) site.

Belongs to the iron/manganese superoxide dismutase family. The cofactor is Mn(2+).

It is found in the mitochondrion matrix. It carries out the reaction 2 superoxide + 2 H(+) = H2O2 + O2. Its function is as follows. Destroys superoxide anion radicals which are normally produced within the cells and which are toxic to biological systems. This chain is Superoxide dismutase [Mn], mitochondrial (Sod2), found in Glossina morsitans morsitans (Savannah tsetse fly).